The primary structure comprises 307 residues: Inner spore coat protein H-like protein (307 aa).

The protein belongs to the CotH family.

It localises to the spore coat. Functionally, involved in the assembly of several proteins in the inner and outer layer of the spore coat. The polypeptide is Inner spore coat protein H-like protein (yisJ) (Bacillus subtilis (strain 168)).